Here is a 166-residue protein sequence, read N- to C-terminus: Interferon gamma (166 aa).

A signal peptide spans 1–23; it reads MSYTTYFLAFQLCVTLCFSGSYC. A Pyrrolidone carboxylic acid modification is found at Q24. 2 N-linked (GlcNAc...) asparagine glycosylation sites follow: N39 and N106.

Belongs to the type II (or gamma) interferon family. In terms of assembly, homodimer. Interacts with IFNGR1 (via extracellular domain); this interaction promotes IFNGR1 dimerization. Released primarily from activated T lymphocytes.

It localises to the secreted. In terms of biological role, type II interferon produced by immune cells such as T-cells and NK cells that plays crucial roles in antimicrobial, antiviral, and antitumor responses by activating effector immune cells and enhancing antigen presentation. Primarily signals through the JAK-STAT pathway after interaction with its receptor IFNGR1 to affect gene regulation. Upon IFNG binding, IFNGR1 intracellular domain opens out to allow association of downstream signaling components JAK2, JAK1 and STAT1, leading to STAT1 activation, nuclear translocation and transcription of IFNG-regulated genes. Many of the induced genes are transcription factors such as IRF1 that are able to further drive regulation of a next wave of transcription. Plays a role in class I antigen presentation pathway by inducing a replacement of catalytic proteasome subunits with immunoproteasome subunits. In turn, increases the quantity, quality, and repertoire of peptides for class I MHC loading. Increases the efficiency of peptide generation also by inducing the expression of activator PA28 that associates with the proteasome and alters its proteolytic cleavage preference. Up-regulates as well MHC II complexes on the cell surface by promoting expression of several key molecules such as cathepsins B/CTSB, H/CTSH, and L/CTSL. Participates in the regulation of hematopoietic stem cells during development and under homeostatic conditions by affecting their development, quiescence, and differentiation. The protein is Interferon gamma (IFNG) of Sus scrofa (Pig).